Consider the following 566-residue polypeptide: Nitrate/nitrite sensor protein NarQ (566 aa).

The Cytoplasmic segment spans residues 1-13; it reads MIVKRPVSASLAR. A helical transmembrane segment spans residues 14 to 34; sequence AFFYIVLLSILSTGIALLTLA. The Periplasmic portion of the chain corresponds to 35–146; that stretch reads SSLRDAEAIN…LALQHYAERK (112 aa). Residues 147-167 form a helical membrane-spanning segment; that stretch reads MLLVVAISLAGGIGIFTLVFF. Topologically, residues 168 to 566 are cytoplasmic; the sequence is TLRRIRHQVV…SAEGEESQLM (399 aa). In terms of domain architecture, HAMP spans 174 to 227; that stretch reads HQVVAPLNQLVTASQRIEHGQFDSPPLDTNLPNELGLLAKTFNQMSSELHKLYR. In terms of domain architecture, Histidine kinase spans 364-559; that stretch reads TIARELHDSL…LVSISFRSAE (196 aa). His370 bears the Phosphohistidine; by autocatalysis mark.

It localises to the cell inner membrane. It carries out the reaction ATP + protein L-histidine = ADP + protein N-phospho-L-histidine.. Functionally, acts as a sensor for nitrate/nitrite and transduces signal of nitrate/nitrite availability to the NarL/NarP proteins. NarQ probably activates NarL and NarP by phosphorylation. NarQ probably negatively regulates the NarL protein by dephosphorylation. This is Nitrate/nitrite sensor protein NarQ (narQ) from Escherichia coli (strain K12).